The sequence spans 601 residues: Putative ankyrin repeat protein R841 (601 aa).

ANK repeat units follow at residues 17–50 (NNITSLMLAVSNYEIHDNYDTVKSLIDCGFDVNA), 54–86 (HGKSVLMYAINIDSDKNINVIKLLIDHGADVNH), 91–123 (QRSVLIHTCMYMEYGYNNKTISLLIDKGANINY), 165–197 (RENILMRIIKKLDNKYSITTIKLLLEHGINIDH), 201–234 (YGQTALMYACIYINGLKNIPIIKLLLEYGANINS), 238–269 (KGWSPLMSVFKNDIIDIKTIKFLVEKGAEINS), 274–310 (NETMLYVFCKKLSTRIYGQACVKIFDFLIKKGISIDN), 314–349 (KGYTPLMAFIIKISEYNEYTEKFIKLLLDYGANINS), 361–390 (VCCDVVSGSVSHCKIEIINTLIKYGADVNS), 397–427 (TILMNLRYSIHSENYITVLEILLRNGANPNI), 432–463 (YHKFPLLIDILNRGGELRIIKLMLQYNIDPNI), and 467–500 (IGNNALLFVAKHYKKNERFSFLKLLLTYGASYNC).

The chain is Putative ankyrin repeat protein R841 from Acanthamoeba polyphaga mimivirus (APMV).